Here is a 230-residue protein sequence, read N- to C-terminus: uncharacterized protein (230 aa).

A run of 6 helical transmembrane segments spans residues 4-24 (ACIAIIIILLTVAAYLAMVKL), 30-50 (LPFLIPVLTTTILIVAALMMF), 67-87 (LLGPAVVALAYPLYKQWHIIV), 91-111 (VPILGGVLVGLCMGMISGLIF), 148-168 (MTVVFVMIAGFSGVILGPLFL), and 210-230 (MTLCAVLGSFFGPLVVWLFHI).

This sequence belongs to the YohK (E.coli)/YwbG (IPA-22R) (B.subtilis) family.

Its subcellular location is the cell membrane. This is an uncharacterized protein from Bacillus subtilis (strain 168).